A 189-amino-acid polypeptide reads, in one-letter code: Molybdenum cofactor guanylyltransferase (189 aa).

GTP contacts are provided by residues leucine 12–glycine 14, lysine 24, aspartate 68, and aspartate 94. Residue aspartate 94 coordinates Mg(2+).

Belongs to the MobA family. Monomer. It depends on Mg(2+) as a cofactor.

The protein localises to the cytoplasm. The enzyme catalyses Mo-molybdopterin + GTP + H(+) = Mo-molybdopterin guanine dinucleotide + diphosphate. Its function is as follows. Transfers a GMP moiety from GTP to Mo-molybdopterin (Mo-MPT) cofactor (Moco or molybdenum cofactor) to form Mo-molybdopterin guanine dinucleotide (Mo-MGD) cofactor. The protein is Molybdenum cofactor guanylyltransferase of Xanthomonas euvesicatoria pv. vesicatoria (strain 85-10) (Xanthomonas campestris pv. vesicatoria).